Here is a 153-residue protein sequence, read N- to C-terminus: Protein SREK1IP1 (153 aa).

Residues 13–30 (AGCRKCGYPGHLTFECRN) form a CCHC-type zinc finger. A disordered region spans residues 44–153 (VSSTSSEDSD…SPNRSEVTKK (110 aa)). Ser52 is modified (phosphoserine). Residues 66–84 (QEKRINEEEEKKKEKSREK) show a composition bias toward basic and acidic residues. The span at 85–94 (IKLKKKRKRS) shows a compositional bias: basic residues. A phosphoserine mark is found at Ser96 and Ser97. The segment covering 106–141 (QKKQKYQKKEKKKEKKNKSKKGKHHKKEKKKRKKEK) has biased composition (basic residues).

Interacts with SREK1/SFRS12.

Its function is as follows. Possible splicing regulator involved in the control of cellular survival. The chain is Protein SREK1IP1 (Srek1ip1) from Rattus norvegicus (Rat).